Here is a 307-residue protein sequence, read N- to C-terminus: Metapyrocatechase (307 aa).

2 VOC domains span residues 7 to 122 (RPGH…LYAD) and 150 to 269 (RFDH…VFCG). Fe cation is bound by residues His-153, His-214, and Glu-265.

The protein belongs to the extradiol ring-cleavage dioxygenase family. As to quaternary structure, homotetramer. Fe(2+) serves as cofactor.

It carries out the reaction catechol + O2 = (2Z,4E)-2-hydroxy-6-oxohexa-2,4-dienoate + H(+). It functions in the pathway aromatic compound metabolism; benzoate degradation via hydroxylation. This chain is Metapyrocatechase (dmpB), found in Pseudomonas sp. (strain CF600).